We begin with the raw amino-acid sequence, 359 residues long: Peptide chain release factor 1 (359 aa).

N5-methylglutamine is present on Gln235. The segment at 280 to 306 is disordered; sequence AERQRADSERSADRKSQVGSGDRSERI.

The protein belongs to the prokaryotic/mitochondrial release factor family. Post-translationally, methylated by PrmC. Methylation increases the termination efficiency of RF1.

The protein resides in the cytoplasm. In terms of biological role, peptide chain release factor 1 directs the termination of translation in response to the peptide chain termination codons UAG and UAA. This chain is Peptide chain release factor 1, found in Rhizobium leguminosarum bv. trifolii (strain WSM2304).